The sequence spans 520 residues: DnaJ homolog l(2)tid, mitochondrial (520 aa).

Residues 1–62 constitute a mitochondrion transit peptide; it reads MMISCKKLFV…RRLHTTRDLL (62 aa). Residue Arg-30 is modified to Omega-N-methylarginine. A J domain is found at 65-130; it reads DYYATLGVAK…QKRREYDTYG (66 aa). At Lys-106 the chain carries N6-acetyllysine. Residues 214–292 form a CR-type zinc finger; the sequence is GVNKDVNVNV…CEGKGRTVQR (79 aa). The Zn(2+) site is built by Cys-227, Cys-230, Cys-244, Cys-247, Cys-266, Cys-269, Cys-280, and Cys-283. One copy of the CXXCXGXG motif; approximate repeat lies at 227-234; sequence CPKCAGTK. One copy of the CXXCXGXG motif repeat lies at 244–251; the sequence is CQYCNGTG. A CXXCXGXG motif; approximate repeat occupies 266–273; that stretch reads CRYCQGTR. The stretch at 280–287 is one CXXCXGXG motif repeat; it reads CSECEGKG. A disordered region spans residues 430-520; it reads QIHGIANRKD…FISKIKSMFN (91 aa). Low complexity predominate over residues 446-476; that stretch reads AGASEEPGAGAAAKASAAAAGSGASKPGPGA. A compositionally biased stretch (basic and acidic residues) spans 479–495; it reads SEGKDQWTDNKKTKAKE. Residues 496–511 show a composition bias toward gly residues; the sequence is GGGSGSGQGDGGGGGF.

As to quaternary structure, interacts with ptc (via C-terminal cytoplasmic region); the interaction is probably direct. Interacts with hh/hedgehog; the interaction is probably mediated by the hedgehog receptor ptc. In terms of processing, appears to produce proteins of differing size. Predicted to have a molecular mass of 56 kDa (TID56) however proteins of 50 kDa, 47 kDa and 40 kDa have been identified and named TID50, TID47 and TID40. TID50 and TID40 localize to the mitochondria while TID47 localizes to the cytoplasm. TID50 is probably TID56 that has undergone mitochondrial transit peptide processing. TID40 and TID47 may be alternately processed proteins or may be isoforms resulting from alternative splicing. As to expression, ubiquitously expressed throughout embryonic development. In larvae, expression is seen in sensory organs, gopplet cells, gonads, imaginal disks, proventriculus, fat body, hematopoietic organ, midgut, Malpighian tubules and ring gland.

It localises to the cytoplasm. It is found in the cytosol. Its subcellular location is the mitochondrion. The protein localises to the mitochondrion outer membrane. Involved in hh/hedgehog signaling. May act as a tumor suppressor in larval imaginal disks. The sequence is that of DnaJ homolog l(2)tid, mitochondrial from Drosophila melanogaster (Fruit fly).